Reading from the N-terminus, the 395-residue chain is Chorismate synthase (395 aa).

R48 serves as a coordination point for NADP(+). 125–127 (RSS) lines the FMN pocket. Positions 264–292 (RNEDWTFDDGESFDHVESEEGDPVPVGND) are disordered. Residues G298, 313 to 317 (HAPTS), and R340 contribute to the FMN site. Positions 373 to 395 (PDRVDGNPGQYDTDYHPSSPDND) are disordered.

Belongs to the chorismate synthase family. The cofactor is FMNH2.

The enzyme catalyses 5-O-(1-carboxyvinyl)-3-phosphoshikimate = chorismate + phosphate. It participates in metabolic intermediate biosynthesis; chorismate biosynthesis; chorismate from D-erythrose 4-phosphate and phosphoenolpyruvate: step 7/7. In terms of biological role, catalyzes the anti-1,4-elimination of the C-3 phosphate and the C-6 proR hydrogen from 5-enolpyruvylshikimate-3-phosphate (EPSP) to yield chorismate, which is the branch point compound that serves as the starting substrate for the three terminal pathways of aromatic amino acid biosynthesis. This reaction introduces a second double bond into the aromatic ring system. This chain is Chorismate synthase, found in Halorubrum lacusprofundi (strain ATCC 49239 / DSM 5036 / JCM 8891 / ACAM 34).